Here is a 217-residue protein sequence, read N- to C-terminus: Holliday junction branch migration complex subunit RuvA (217 aa).

Positions 1–64 (MIGKLTGILD…EDAIRLFGFE (64 aa)) are domain I. The domain II stretch occupies residues 65–145 (TKVEQDWFCL…NAPHQSMPHF (81 aa)). The segment at 146–160 (VSYSSETSSQAGTQH) is flexible linker. The segment at 161-217 (TGHQHSMDALAALTKLGFERDQATHALQEAIKAFEGETPSSALLIRHSLKLLSSHLK) is domain III.

This sequence belongs to the RuvA family. In terms of assembly, homotetramer. Forms an RuvA(8)-RuvB(12)-Holliday junction (HJ) complex. HJ DNA is sandwiched between 2 RuvA tetramers; dsDNA enters through RuvA and exits via RuvB. An RuvB hexamer assembles on each DNA strand where it exits the tetramer. Each RuvB hexamer is contacted by two RuvA subunits (via domain III) on 2 adjacent RuvB subunits; this complex drives branch migration. In the full resolvosome a probable DNA-RuvA(4)-RuvB(12)-RuvC(2) complex forms which resolves the HJ.

Its subcellular location is the cytoplasm. Its function is as follows. The RuvA-RuvB-RuvC complex processes Holliday junction (HJ) DNA during genetic recombination and DNA repair, while the RuvA-RuvB complex plays an important role in the rescue of blocked DNA replication forks via replication fork reversal (RFR). RuvA specifically binds to HJ cruciform DNA, conferring on it an open structure. The RuvB hexamer acts as an ATP-dependent pump, pulling dsDNA into and through the RuvAB complex. HJ branch migration allows RuvC to scan DNA until it finds its consensus sequence, where it cleaves and resolves the cruciform DNA. The sequence is that of Holliday junction branch migration complex subunit RuvA from Bartonella bacilliformis (strain ATCC 35685 / KC583 / Herrer 020/F12,63).